The chain runs to 306 residues: Ribosomal RNA small subunit methyltransferase H (306 aa).

Residues 37 to 39, D56, D102, and Q109 contribute to the S-adenosyl-L-methionine site; that span reads GGH.

The protein belongs to the methyltransferase superfamily. RsmH family.

Its subcellular location is the cytoplasm. It catalyses the reaction cytidine(1402) in 16S rRNA + S-adenosyl-L-methionine = N(4)-methylcytidine(1402) in 16S rRNA + S-adenosyl-L-homocysteine + H(+). Functionally, specifically methylates the N4 position of cytidine in position 1402 (C1402) of 16S rRNA. This is Ribosomal RNA small subunit methyltransferase H from Nautilia profundicola (strain ATCC BAA-1463 / DSM 18972 / AmH).